Here is a 73-residue protein sequence, read N- to C-terminus: Putative membrane protein insertion efficiency factor (73 aa).

Belongs to the UPF0161 family.

Its subcellular location is the cell inner membrane. In terms of biological role, could be involved in insertion of integral membrane proteins into the membrane. The protein is Putative membrane protein insertion efficiency factor of Neisseria gonorrhoeae (strain ATCC 700825 / FA 1090).